The primary structure comprises 364 residues: DNA replication and repair protein RecF (364 aa).

30–37 (GENGSGKT) contacts ATP.

It belongs to the RecF family.

It is found in the cytoplasm. Its function is as follows. The RecF protein is involved in DNA metabolism; it is required for DNA replication and normal SOS inducibility. RecF binds preferentially to single-stranded, linear DNA. It also seems to bind ATP. The chain is DNA replication and repair protein RecF from Pseudoalteromonas translucida (strain TAC 125).